Reading from the N-terminus, the 127-residue chain is Holotricin-2 (127 aa).

The N-terminal stretch at 1 to 15 (MMKLVIALCLIGISA) is a signal peptide. The propeptide occupies 16-55 (AYVVPVYYEIYPEDATFDEADIEPQLSPAELHHGSIRERR). A disordered region spans residues 43–84 (PAELHHGSIRERRSLQPGAPSFPMPGSQLPTSVSGNVEKQGR). Positions 45 to 56 (ELHHGSIRERRS) are enriched in basic and acidic residues. The span at 70-84 (QLPTSVSGNVEKQGR) shows a compositional bias: polar residues.

The protein belongs to the coleoptericin family. As to expression, hemolymph.

Its subcellular location is the secreted. Its function is as follows. Antibacterial activity against Gram-negative bacteria but not against Gram-positive bacteria. The chain is Holotricin-2 from Holotrichia diomphalia (Korean black chafer).